The following is a 263-amino-acid chain: Lens fiber major intrinsic protein (263 aa).

Residues 1–9 (MWELRSASF) lie on the Cytoplasmic side of the membrane. A helical transmembrane segment spans residues 10-29 (WRAIFAEFFATLFYVFFGLG). Over 30–41 (ASLRWTPGPLHV) the chain is Extracellular. The chain crosses the membrane as a helical span at residues 42–59 (LQVALAFGLALATLVQAV). The Cytoplasmic segment spans residues 60-61 (GH). Positions 62-77 (ISGAHVNPAVTFAFLV) form an intramembrane region, discontinuously helical. The short motif at 68-70 (NPA) is the NPA 1 element. At 78 to 82 (GSQMS) the chain is on the cytoplasmic side. Residues 83 to 106 (LLRAFCYMAAQLLGAVAGAAVLYS) traverse the membrane as a helical segment. Residues 107-127 (VTPPAVRGNLALNTLHPGVSV) lie on the Extracellular side of the membrane. A helical membrane pass occupies residues 128–148 (GQATTVEIFLTLQFVLCIFAT). The Cytoplasmic segment spans residues 149-156 (YDERRNGR). Residues 157-175 (LGSVALAVGFSLTLGHLFG) form a helical membrane-spanning segment. At 176–178 (MYY) the chain is on the extracellular side. Residues 179–193 (TGAGMNPARSFAPAI) constitute an intramembrane region (discontinuously helical). The short motif at 184-186 (NPA) is the NPA 2 element. Topologically, residues 194–200 (LTRNFTN) are extracellular. Residues 201–222 (HWVYWVGPIIGGGLGSLLYDFL) form a helical membrane-spanning segment. Residues 223–263 (LFPRLKSVSERLSILKGARPSDSNGQPEGTGEPVELKTQAL) lie on the Cytoplasmic side of the membrane. Positions 227–237 (LKSVSERLSIL) are interaction with CALM. Ser235, Ser243, and Ser245 each carry phosphoserine. The disordered stretch occupies residues 240 to 263 (ARPSDSNGQPEGTGEPVELKTQAL). Asn246 is subject to Deamidated asparagine.

The protein belongs to the MIP/aquaporin (TC 1.A.8) family. Homotetramer; each monomer provides an independent water pore. Two homotetramers on opposing membranes can dimerize, forming a cell-cell junction. Interacts with CALM; the calcium-calmodulin/CALM complex interacts with the cytoplasmic domains of two aquaporins, leading to channel closure. Interacts with BFSP1 (via C-terminus); prevents calcium-dependent inhibition of the water channel activity. Post-translationally, subject to partial proteolytic cleavage in the eye lens core. Partial proteolysis promotes interactions between tetramers from adjoining membranes. In terms of processing, fatty acylated at Met-1 and Lys-238. The acyl modifications, in decreasing order of ion abundance, are: oleoyl (C18:1) &gt; palmitoyl (C16:0) &gt; stearoyl (C18:0) &gt; eicosenoyl (C20:1) &gt; dihomo-gamma-linolenoyl (C20:3) &gt; palmitoleoyl (C16:1) &gt; eicosadienoyl (C20:2).

Its subcellular location is the cell membrane. It is found in the cell junction. The catalysed reaction is H2O(in) = H2O(out). With respect to regulation, the water channel activity is inhibited by calcium through calmodulin/CALM. Its function is as follows. Aquaporins form homotetrameric transmembrane channels, with each monomer independently mediating water transport across the plasma membrane along its osmotic gradient. Specifically expressed in lens fiber cells, this aquaporin is crucial for maintaining lens water homeostasis and transparency. Beyond water permeability, it also acts as a cell-to-cell adhesion molecule, forming thin junctions between lens fiber cells that are essential for maintaining the ordered structure and transparency of the lens. The chain is Lens fiber major intrinsic protein from Canis lupus familiaris (Dog).